The chain runs to 329 residues: Transmembrane protein I329L (329 aa).

Residues 1-31 form the signal peptide; sequence MLRVFIFFVFLGSGLAGRIKPQITCKYFISE. Asn-32, Asn-39, Asn-44, Asn-76, Asn-82, and Asn-101 each carry an N-linked (GlcNAc...) asparagine; by host glycan. The Extracellular segment spans residues 32-239; it reads NNTWYKYNVT…NTERYKNCYP (208 aa). An LRR repeat occupies 112-133; sequence ELKFLDLRYNNLQFIDYNILRK. N-linked (GlcNAc...) asparagine; by host glycans are attached at residues Asn-185 and Asn-219. Cys-195 and Cys-237 are oxidised to a cystine. Residues 240-260 form a helical membrane-spanning segment; the sequence is FVLVSILCSCISFLFLIICLL. The Cytoplasmic segment spans residues 261–329; sequence RSICKKYSCT…EKKASCSRRK (69 aa).

The protein belongs to the asfivirus I329L family. In terms of processing, highly glycosylated.

The protein localises to the host endoplasmic reticulum membrane. It is found in the host Golgi apparatus membrane. In terms of biological role, viral TLR3 homolog that probably prevents TLR3 dimerization and subsequent induction of IFN. Inhibits dsRNA-stimulated activation of NF-kB and IRF3. In Ornithodoros (relapsing fever ticks), this protein is Transmembrane protein I329L.